The primary structure comprises 400 residues: Argininosuccinate synthase (400 aa).

ATP is bound by residues 6–14 and Ala-33; that span reads AYSGGLDTS. Positions 84 and 89 each coordinate L-citrulline. Gly-114 contacts ATP. Residues Thr-116, Asn-120, and Asp-121 each contribute to the L-aspartate site. L-citrulline is bound at residue Asn-120. Residues Arg-124, Ser-173, Ser-182, Glu-258, and Tyr-270 each coordinate L-citrulline.

This sequence belongs to the argininosuccinate synthase family. Type 1 subfamily. As to quaternary structure, homotetramer.

Its subcellular location is the cytoplasm. It carries out the reaction L-citrulline + L-aspartate + ATP = 2-(N(omega)-L-arginino)succinate + AMP + diphosphate + H(+). It functions in the pathway amino-acid biosynthesis; L-arginine biosynthesis; L-arginine from L-ornithine and carbamoyl phosphate: step 2/3. The protein is Argininosuccinate synthase of Thermus thermophilus (strain ATCC BAA-163 / DSM 7039 / HB27).